The sequence spans 259 residues: MAVISMKQLLEAGVHFGHQTRRWNPKMAKYIFTERNGIHVIDLQQTVKYADQAYDFMRDAAANDAVVLFVGTKKQAADAVAEEAVRSGQYFINHRWLGGTLTNWGTIQKRIARLKEIKRMEEDGTFEVLPKKEVALLNKQRARLEKFLGGIEDMPRIPDVMYVVDPHKEQIAVKEAKKLGIPVVAMVDTNTDPDDIDVIIPANDDAIRAVKLITAKLADAIIEGRQGEDAVAVEAEFAALETQADSIEEIVEVVEGDNA.

The protein belongs to the universal ribosomal protein uS2 family.

In Streptococcus pneumoniae serotype 4 (strain ATCC BAA-334 / TIGR4), this protein is Small ribosomal subunit protein uS2.